The following is a 157-amino-acid chain: 2-C-methyl-D-erythritol 2,4-cyclodiphosphate synthase (157 aa).

Aspartate 8 and histidine 10 together coordinate a divalent metal cation. Residues 8-10 (DVH) and 34-35 (HS) contribute to the 4-CDP-2-C-methyl-D-erythritol 2-phosphate site. Histidine 42 is a binding site for a divalent metal cation. 4-CDP-2-C-methyl-D-erythritol 2-phosphate is bound by residues 56–58 (DIG), 61–65 (FPDTD), 100–106 (AQAPKMA), 132–135 (TTTE), phenylalanine 139, and arginine 142.

It belongs to the IspF family. Homotrimer. A divalent metal cation is required as a cofactor.

The catalysed reaction is 4-CDP-2-C-methyl-D-erythritol 2-phosphate = 2-C-methyl-D-erythritol 2,4-cyclic diphosphate + CMP. It participates in isoprenoid biosynthesis; isopentenyl diphosphate biosynthesis via DXP pathway; isopentenyl diphosphate from 1-deoxy-D-xylulose 5-phosphate: step 4/6. Functionally, involved in the biosynthesis of isopentenyl diphosphate (IPP) and dimethylallyl diphosphate (DMAPP), two major building blocks of isoprenoid compounds. Catalyzes the conversion of 4-diphosphocytidyl-2-C-methyl-D-erythritol 2-phosphate (CDP-ME2P) to 2-C-methyl-D-erythritol 2,4-cyclodiphosphate (ME-CPP) with a corresponding release of cytidine 5-monophosphate (CMP). The chain is 2-C-methyl-D-erythritol 2,4-cyclodiphosphate synthase from Pseudomonas savastanoi pv. phaseolicola (strain 1448A / Race 6) (Pseudomonas syringae pv. phaseolicola (strain 1448A / Race 6)).